Consider the following 59-residue polypeptide: Prokaryotic ubiquitin-like protein UBact (59 aa).

The interval 1 to 59 (MEMTDPLRREEKKESSPDPKEESGPSRPDVSRPGRDSLLKRMKKVDPKQSEKYKQRTGQ) is disordered. Deamidated glutamine is present on Q59. Residue Q59 forms an Isoglutamyl lysine isopeptide (Gln-Lys) (interchain with K-? in acceptor proteins) linkage.

Belongs to the ubiquitin-like protein UBact family. May be modified by deamidation of its C-terminal glutamine to glutamate by the adjacently encoded deamidase. This could be a prerequisite to the subsequent conjugation, as shown in the other prokaryotic ubiquitin-like protein Pup.

Its function is as follows. May function as a protein modifier covalently attached to lysine residues of substrate proteins. This may serve to target the modified proteins for degradation by proteasomes. The sequence is that of Prokaryotic ubiquitin-like protein UBact from Nitrospina gracilis (strain 3/211).